Here is a 176-residue protein sequence, read N- to C-terminus: Peptide deformylase (176 aa).

Cys-97 and His-139 together coordinate Fe cation. Glu-140 is an active-site residue. His-143 is a Fe cation binding site.

This sequence belongs to the polypeptide deformylase family. Fe(2+) serves as cofactor.

The enzyme catalyses N-terminal N-formyl-L-methionyl-[peptide] + H2O = N-terminal L-methionyl-[peptide] + formate. In terms of biological role, removes the formyl group from the N-terminal Met of newly synthesized proteins. Requires at least a dipeptide for an efficient rate of reaction. N-terminal L-methionine is a prerequisite for activity but the enzyme has broad specificity at other positions. This Thermomicrobium roseum (strain ATCC 27502 / DSM 5159 / P-2) protein is Peptide deformylase.